A 357-amino-acid chain; its full sequence is (4E)-oxalomesaconate Delta-isomerase (357 aa).

The protein belongs to the PrpF family.

The catalysed reaction is (1E)-4-oxobut-1-ene-1,2,4-tricarboxylate = (3Z)-2-oxo-4-carboxy-3-hexenedioate. The protein operates within secondary metabolite metabolism; lignin degradation. Functionally, contributes to the degradation of lignin at the level of the protocatechuate 4,5-cleavage pathway. Catalyzes the isomerization of the double bond between C4 and C5 in (4E)-oxalomesaconate (OMA) to (3Z)-2-keto-4-carboxy-3-hexenedioate (KCH), where the double bond has migrated between C3 and C4 via a 1,3-allylic isomerization. This is (4E)-oxalomesaconate Delta-isomerase from Novosphingobium sp. (strain KA1) (Sphingomonas sp. (strain KA1)).